A 247-amino-acid chain; its full sequence is Neurotrophic factor BDNF precursor form (247 aa).

The signal sequence occupies residues 1–18 (MTILFLTMVISYFGCMKA). Positions 19-128 (APMKEANIRG…AANMSMRVRR (110 aa)) are excised as a propeptide. The N-linked (GlcNAc...) asparagine glycan is linked to Asn-121. 3 disulfide bridges follow: Cys-141/Cys-208, Cys-186/Cys-237, and Cys-196/Cys-239.

Belongs to the NGF-beta family. In terms of assembly, monomers and homodimers. Binds to NTRK2/TRKB. Can form heterodimers with other neurotrophin family members, such as NTF3 and NTF4 (in vitro), but the physiological relevance of this is not clear. BDNF precursor form: interacts with the heterodimer formed by NGFR and SORCS2. N-glycosylated and glycosulfated, contrary to mature BDNF. In terms of processing, mature BDNF is produced by proteolytic removal of the propeptide, catalyzed by a FURIN family member. In addition, the precursor form is proteolytically cleaved within the propeptide, but this is not an obligatory intermediate for the production of mature BDNF. Can be converted into mature BDNF by plasmin (PLG). As to expression, detected in blood plasma and in saliva (at protein level). Brain. Highly expressed in hippocampus, amygdala, cerebral cortex and cerebellum. Also expressed in heart, lung, skeletal muscle, testis, prostate and placenta.

It localises to the secreted. In terms of biological role, important signaling molecule that activates signaling cascades downstream of NTRK2. During development, promotes the survival and differentiation of selected neuronal populations of the peripheral and central nervous systems. Participates in axonal growth, pathfinding and in the modulation of dendritic growth and morphology. Major regulator of synaptic transmission and plasticity at adult synapses in many regions of the CNS. The versatility of BDNF is emphasized by its contribution to a range of adaptive neuronal responses including long-term potentiation (LTP), long-term depression (LTD), certain forms of short-term synaptic plasticity, as well as homeostatic regulation of intrinsic neuronal excitability. Important signaling molecule that activates signaling cascades downstream of NTRK2. Activates signaling cascades via the heterodimeric receptor formed by NGFR and SORCS2. Signaling via NGFR and SORCS2 plays a role in synaptic plasticity and long-term depression (LTD). Binding to NGFR and SORCS2 promotes neuronal apoptosis. Promotes neuronal growth cone collapse. This chain is Neurotrophic factor BDNF precursor form, found in Homo sapiens (Human).